The chain runs to 240 residues: Sulfite dehydrogenase subunit B (240 aa).

4Fe-4S ferredoxin-type domains are found at residues 4–34 (LALV…WAGP), 64–95 (TETV…KRPD), and 97–126 (GVVL…LDAQ). 12 residues coordinate [4Fe-4S] cluster: C13, C16, C19, C23, C73, C76, C81, C85, C106, C109, C112, and C116.

Forms a heterotrimeric membrane-bound complex composed of a catalytic heterodimer (SoeAB) and a membrane anchor protein (SoeC). [4Fe-4S] cluster serves as cofactor.

Its subcellular location is the cell inner membrane. In terms of biological role, part of the SoeABC complex that catalyzes the oxidation of sulfite to sulfate. SoeB is probably the electron transfer subunit. The polypeptide is Sulfite dehydrogenase subunit B (Allochromatium vinosum (strain ATCC 17899 / DSM 180 / NBRC 103801 / NCIMB 10441 / D) (Chromatium vinosum)).